We begin with the raw amino-acid sequence, 229 residues long: Prolactin (229 aa).

The signal sequence occupies residues 1–30 (MDSKGSAQKGSRLLLLLVVSNLLLCQGVVS). Residues cysteine 34 and cysteine 41 are joined by a disulfide bond. Serine 56 bears the Phosphoserine mark. The N-linked (GlcNAc...) asparagine; partial glycan is linked to asparagine 61. Phosphoserine is present on residues serine 64 and serine 120. Disulfide bonds link cysteine 88–cysteine 204 and cysteine 221–cysteine 229.

It belongs to the somatotropin/prolactin family. Interacts with PRLR.

It is found in the secreted. Functionally, prolactin acts primarily on the mammary gland by promoting lactation, mammogenesis, mitogenesis and osmoregulation. This chain is Prolactin (PRL), found in Ovis aries (Sheep).